The following is a 416-amino-acid chain: 3-phosphoshikimate 1-carboxyvinyltransferase (416 aa).

3 residues coordinate 3-phosphoshikimate: lysine 20, serine 21, and arginine 25. Lysine 20 serves as a coordination point for phosphoenolpyruvate. Phosphoenolpyruvate is bound by residues glycine 88 and arginine 116. 6 residues coordinate 3-phosphoshikimate: serine 159, serine 160, glutamine 161, serine 186, aspartate 300, and lysine 327. A phosphoenolpyruvate-binding site is contributed by glutamine 161. Aspartate 300 functions as the Proton acceptor in the catalytic mechanism. Phosphoenolpyruvate-binding residues include arginine 331 and arginine 373.

It belongs to the EPSP synthase family. In terms of assembly, monomer.

Its subcellular location is the cytoplasm. It catalyses the reaction 3-phosphoshikimate + phosphoenolpyruvate = 5-O-(1-carboxyvinyl)-3-phosphoshikimate + phosphate. It participates in metabolic intermediate biosynthesis; chorismate biosynthesis. Catalyzes the transfer of the enolpyruvyl moiety of phosphoenolpyruvate (PEP) to the 5-hydroxyl of shikimate-3-phosphate (S3P) to produce enolpyruvyl shikimate-3-phosphate and inorganic phosphate. The chain is 3-phosphoshikimate 1-carboxyvinyltransferase from Archaeoglobus fulgidus (strain ATCC 49558 / DSM 4304 / JCM 9628 / NBRC 100126 / VC-16).